We begin with the raw amino-acid sequence, 120 residues long: Large ribosomal subunit protein uL18 (120 aa).

It belongs to the universal ribosomal protein uL18 family. As to quaternary structure, part of the 50S ribosomal subunit; part of the 5S rRNA/L5/L18/L25 subcomplex. Contacts the 5S and 23S rRNAs.

Functionally, this is one of the proteins that bind and probably mediate the attachment of the 5S RNA into the large ribosomal subunit, where it forms part of the central protuberance. In Rhizobium etli (strain ATCC 51251 / DSM 11541 / JCM 21823 / NBRC 15573 / CFN 42), this protein is Large ribosomal subunit protein uL18.